The following is a 248-amino-acid chain: 2,3-bisphosphoglycerate-dependent phosphoglycerate mutase (248 aa).

Residues 8-15 (RHGESEWN), 21-22 (TG), Arg60, 87-90 (ERHY), Lys98, 114-115 (RR), and 183-184 (GN) each bind substrate. Catalysis depends on His9, which acts as the Tele-phosphohistidine intermediate. Glu87 functions as the Proton donor/acceptor in the catalytic mechanism.

The protein belongs to the phosphoglycerate mutase family. BPG-dependent PGAM subfamily.

It catalyses the reaction (2R)-2-phosphoglycerate = (2R)-3-phosphoglycerate. Its pathway is carbohydrate degradation; glycolysis; pyruvate from D-glyceraldehyde 3-phosphate: step 3/5. Its function is as follows. Catalyzes the interconversion of 2-phosphoglycerate and 3-phosphoglycerate. The chain is 2,3-bisphosphoglycerate-dependent phosphoglycerate mutase from Borrelia garinii subsp. bavariensis (strain ATCC BAA-2496 / DSM 23469 / PBi) (Borreliella bavariensis).